The primary structure comprises 627 residues: DEAD-box ATP-dependent RNA helicase 35A (627 aa).

Composition is skewed to low complexity over residues 1–15 (MAAA…AAAA) and 52–61 (SSSAAEAASD). Disordered stretches follow at residues 1 to 23 (MAAA…EDNY) and 40 to 85 (LRRL…LEAS). Over residues 62–72 (LPPPPPPPPNQ) the composition is skewed to pro residues. A Q motif motif is present at residues 182-210 (RDFRDLRLPEPMLRKLREKGIVQPTPIQV). The 185-residue stretch at 213 to 397 (LPVVLSGRDM…KSALVKPVIV (185 aa)) folds into the Helicase ATP-binding domain. 226-233 (AFTGSGKT) lines the ATP pocket. Residues 345–348 (DEAD) carry the DEAD box motif. The Helicase C-terminal domain maps to 408-568 (DVIQEVEYVK…RIPPVLAELN (161 aa)). A CCHC-type zinc finger spans residues 584 to 601 (KGCAYCGGLGHRVTDCPK).

Belongs to the DEAD box helicase family. DDX41 subfamily.

The catalysed reaction is ATP + H2O = ADP + phosphate + H(+). This Oryza sativa subsp. japonica (Rice) protein is DEAD-box ATP-dependent RNA helicase 35A.